We begin with the raw amino-acid sequence, 75 residues long: MPLPKISEARELSDEKLSDEIVAIKRQLFQLRLQKATRQLEKPHQFRQARHRLAQLLTLETERKRAASQSAKEEK.

This sequence belongs to the universal ribosomal protein uL29 family.

The chain is Large ribosomal subunit protein uL29 from Nostoc punctiforme (strain ATCC 29133 / PCC 73102).